Here is a 361-residue protein sequence, read N- to C-terminus: Phospho-N-acetylmuramoyl-pentapeptide-transferase (361 aa).

The next 10 helical transmembrane spans lie at 26 to 46, 73 to 93, 98 to 118, 139 to 159, 168 to 188, 200 to 220, 237 to 257, 264 to 284, 289 to 309, and 339 to 359; these read SILAALTALFLSLWIGPVLIQ, TMGGSLILMTVTLSVLLWGDL, VWLVLVVMLAFGAIGWYDDWI, IFGLAAGLFLYFTADVPAAVT, IALPLTSISFVAITYFWIVGF, GLAIMPTVLVACALGVFAYAS, AGDLIIICAAIAGAGLGFLWF, VFMGDIGALALGAVLGTIAVI, LVLVVMGGVFVIETLSVIIQV, and VIVRFWIISVVLVLVGLATLK.

This sequence belongs to the glycosyltransferase 4 family. MraY subfamily. Mg(2+) is required as a cofactor.

It is found in the cell inner membrane. The enzyme catalyses UDP-N-acetyl-alpha-D-muramoyl-L-alanyl-gamma-D-glutamyl-meso-2,6-diaminopimeloyl-D-alanyl-D-alanine + di-trans,octa-cis-undecaprenyl phosphate = di-trans,octa-cis-undecaprenyl diphospho-N-acetyl-alpha-D-muramoyl-L-alanyl-D-glutamyl-meso-2,6-diaminopimeloyl-D-alanyl-D-alanine + UMP. The protein operates within cell wall biogenesis; peptidoglycan biosynthesis. Its function is as follows. Catalyzes the initial step of the lipid cycle reactions in the biosynthesis of the cell wall peptidoglycan: transfers peptidoglycan precursor phospho-MurNAc-pentapeptide from UDP-MurNAc-pentapeptide onto the lipid carrier undecaprenyl phosphate, yielding undecaprenyl-pyrophosphoryl-MurNAc-pentapeptide, known as lipid I. In Xylella fastidiosa (strain M12), this protein is Phospho-N-acetylmuramoyl-pentapeptide-transferase.